A 349-amino-acid polypeptide reads, in one-letter code: Pinopsin (349 aa).

Polar residues predominate over residues 1–16 (MDPTNSPQEPPHTSTP). Positions 1-22 (MDPTNSPQEPPHTSTPGPFDGP) are disordered. The Extracellular segment spans residues 1–32 (MDPTNSPQEPPHTSTPGPFDGPQWPHQAPRGM). A helical membrane pass occupies residues 33–57 (YLSVAVLMGIVVISASVVNGLVIVV). Topologically, residues 58–69 (SIRYKKLRSPLN) are cytoplasmic. Residues 70 to 94 (YILVNLAMADLLVTLCGSSVSFSNN) traverse the membrane as a helical segment. At 95–109 (INGFFVFGKRLCELE) the chain is on the extracellular side. Cysteines 106 and 183 form a disulfide. The chain crosses the membrane as a helical span at residues 110–129 (GFMVSLTGIVGLWSLAILAL). Topologically, residues 130 to 148 (ERYVVVCRPLGDFRFQHRH) are cytoplasmic. Residues 149-172 (AVTGCAFTWVWSLLWTTPPLLGWS) traverse the membrane as a helical segment. The Extracellular portion of the chain corresponds to 173–196 (SYVPEGLRTSCGPNWYTGGSNNNS). Asn194 is a glycosylation site (N-linked (GlcNAc...) asparagine). The helical transmembrane segment at 197–224 (YILTLFVTCFVMPLSLILFSYANLLMTL) threads the bilayer. At 225–246 (RAAAAQQQESDTTQQAERQVTR) the chain is on the cytoplasmic side. The helical transmembrane segment at 247–270 (MVVAMVMAFLICWLPYTTFALVVA) threads the bilayer. At 271–278 (TNKDIAIQ) the chain is on the extracellular side. A helical transmembrane segment spans residues 279–303 (PALASLPSYFSKTATVYNPIIYVFM). Lys290 carries the N6-(retinylidene)lysine modification. Residues 304-349 (NKQFQSCLLKMLCCGHHPRGTGRTAPAAPASPTDGLRNKVTPSHPV) are Cytoplasmic-facing. Residues Cys316 and Cys317 are each lipidated (S-palmitoyl cysteine). A disordered region spans residues 325–349 (GRTAPAAPASPTDGLRNKVTPSHPV).

Belongs to the G-protein coupled receptor 1 family. Opsin subfamily. Phosphorylated on some or all of the serine and threonine residues present in the C-terminal region. In terms of tissue distribution, pineal gland.

The protein resides in the membrane. In terms of biological role, produces a slow and prolonged phototransduction response consistent with the non-visual function of pineal photoreception. The sequence is that of Pinopsin from Columba livia (Rock dove).